The chain runs to 550 residues: Proteasome-associated ATPase (550 aa).

Residues 9 to 48 (EELARRVASLSAQNERLAQILVEARSKIVGLQQQIDDLAQ) adopt a coiled-coil conformation. 233–238 (GCGKTL) contacts ATP. A disordered region spans residues 528–550 (KGEGKNPTPAKAIETPHNTGPYL). Residues 549 to 550 (YL) form a docks into pockets in the proteasome alpha-ring region.

Belongs to the AAA ATPase family. In terms of assembly, homohexamer. Assembles into a hexameric ring structure that caps the 20S proteasome core. Strongly interacts with the prokaryotic ubiquitin-like protein Pup through a hydrophobic interface; the interacting region of ARC lies in its N-terminal coiled-coil domain. There is one Pup binding site per ARC hexamer ring. Upon ATP-binding, the C-terminus of ARC interacts with the alpha-rings of the proteasome core, possibly by binding to the intersubunit pockets.

Its pathway is protein degradation; proteasomal Pup-dependent pathway. Functionally, ATPase which is responsible for recognizing, binding, unfolding and translocation of pupylated proteins into the bacterial 20S proteasome core particle. May be essential for opening the gate of the 20S proteasome via an interaction with its C-terminus, thereby allowing substrate entry and access to the site of proteolysis. Thus, the C-termini of the proteasomal ATPase may function like a 'key in a lock' to induce gate opening and therefore regulate proteolysis. This Jonesia denitrificans (strain ATCC 14870 / DSM 20603 / BCRC 15368 / CIP 55.134 / JCM 11481 / NBRC 15587 / NCTC 10816 / Prevot 55134) (Listeria denitrificans) protein is Proteasome-associated ATPase.